A 193-amino-acid polypeptide reads, in one-letter code: Ion-translocating oxidoreductase complex subunit A (193 aa).

6 consecutive transmembrane segments (helical) span residues 4–24 (FLLV…KFLG), 39–59 (IGMG…CWLV), 71–91 (FLRI…IETV), 102–122 (ALGI…LPLM), 134–154 (TLSG…FAGM), and 171–191 (PIAF…AGLV).

It belongs to the NqrDE/RnfAE family. The complex is composed of six subunits: RnfA, RnfB, RnfC, RnfD, RnfE and RnfG.

The protein localises to the cellular chromatophore membrane. Functionally, part of a membrane-bound complex that couples electron transfer with translocation of ions across the membrane. Required for nitrogen fixation. Involved in electron transfer to nitrogenase. The sequence is that of Ion-translocating oxidoreductase complex subunit A from Rhodobacter capsulatus (Rhodopseudomonas capsulata).